The chain runs to 873 residues: F-BAR domain only protein 1 (873 aa).

One can recognise an F-BAR domain in the interval 1–248; it reads MSYFGEHFWG…NVENVTVDML (248 aa). The segment at 1–275 is mediates membrane-binding; it reads MSYFGEHFWG…LDFDAYSSAA (275 aa). Positions 153-172 are disordered; the sequence is RENTSQKEMDKAETKSKKAA. Residues 155–178 are a coiled coil; the sequence is NTSQKEMDKAETKSKKAADSLRRS. The interval 267-439 is mediates interaction with the adaptor protein complex AP-2; that stretch reads DFDAYSSAAL…KSLFGPPLES (173 aa). Residues S295, S343, and S368 each carry the phosphoserine modification. The interval 302-347 is disordered; sequence SVDFLESDSGVPPEVDDEGFTVRPDISQNNGAEPPRFSSSDSDFDD. Disordered stretches follow at residues 381–600 and 813–833; these read GSLI…RGPS and SGHL…SPVA. The segment covering 447–466 has biased composition (low complexity); it reads TGSSSLGFTSSPSPFSSSSP. S518 bears the Phosphoserine mark. The span at 567 to 576 shows a compositional bias: low complexity; the sequence is SLSPSPLGSS. Residues 593–873 are mediates interaction with AGFG1, CALM, DAB2, EPS15, EPS15R, ITSN1 and clathrin; it reads HGISRGPSPV…FATGMYLVSC (281 aa). Position 600 is a phosphoserine (S600). An MHD domain is found at 609 to 872; the sequence is ALPVATAFTE…RFATGMYLVS (264 aa). Positions 816 to 827 are enriched in polar residues; it reads LSASWQPQSGPS.

This sequence belongs to the FCHO family. As to quaternary structure, may oligomerize and form homotetramer. Interacts with AP2A2 and AP2B1; 2 subunits of the adaptor protein complex AP-2. Interacts with DAB2. Interacts with clathrin (CLTC or CLTCL1). Interacts with EPS15, EPS15R and ITSN1. Interacts with AGFG1 and CALM. May interact with ACVR1; linking this receptor to clathrin-mediated endocytosis. Mainly detected in brain and spleen.

Its subcellular location is the membrane. The protein resides in the clathrin-coated pit. Its function is as follows. Functions in an early step of clathrin-mediated endocytosis. Has both a membrane binding/bending activity and the ability to recruit proteins essential to the formation of functional clathrin-coated pits. May regulate Bmp signaling by regulating clathrin-mediated endocytosis of Bmp receptors. Involved in the regulation of T-cell poliferation and activation. Affects TCR clustering upon receptor triggering and modulates its internalisation, playing a role in TCR-dependent T-cell activation. In Mus musculus (Mouse), this protein is F-BAR domain only protein 1.